The sequence spans 192 residues: Fe/S biogenesis protein NfuA (192 aa).

[4Fe-4S] cluster contacts are provided by C149 and C152.

It belongs to the NfuA family. In terms of assembly, homodimer. The cofactor is [4Fe-4S] cluster.

Its function is as follows. Involved in iron-sulfur cluster biogenesis. Binds a 4Fe-4S cluster, can transfer this cluster to apoproteins, and thereby intervenes in the maturation of Fe/S proteins. Could also act as a scaffold/chaperone for damaged Fe/S proteins. The protein is Fe/S biogenesis protein NfuA of Shewanella denitrificans (strain OS217 / ATCC BAA-1090 / DSM 15013).